We begin with the raw amino-acid sequence, 353 residues long: Photosystem II protein D1 (353 aa).

N-acetylthreonine is present on threonine 2. Phosphothreonine is present on threonine 2. 3 helical membrane passes run 29–46 (YIGW…TATS), 118–133 (HFLL…EWEL), and 142–156 (WIAV…AATA). Chlorophyll a is bound at residue histidine 118. Tyrosine 126 lines the pheophytin a pocket. 2 residues coordinate [CaMn4O5] cluster: aspartate 170 and glutamate 189. A helical transmembrane segment spans residues 197–218 (FHMLGVAGVFGGSLFSAMHGSL). Histidine 198 lines the chlorophyll a pocket. A quinone contacts are provided by residues histidine 215 and 264 to 265 (SF). Histidine 215 contributes to the Fe cation binding site. Residue histidine 272 coordinates Fe cation. Residues 274–288 (FLAAWPVVCIWFTAL) form a helical membrane-spanning segment. [CaMn4O5] cluster is bound by residues histidine 332, glutamate 333, aspartate 342, and alanine 344. The propeptide occupies 345 to 353 (SVDAPAVQG).

Belongs to the reaction center PufL/M/PsbA/D family. In terms of assembly, PSII is composed of 1 copy each of membrane proteins PsbA, PsbB, PsbC, PsbD, PsbE, PsbF, PsbH, PsbI, PsbJ, PsbK, PsbL, PsbM, PsbT, PsbX, PsbY, PsbZ, Psb30/Ycf12, at least 3 peripheral proteins of the oxygen-evolving complex and a large number of cofactors. It forms dimeric complexes. The cofactor is The D1/D2 heterodimer binds P680, chlorophylls that are the primary electron donor of PSII, and subsequent electron acceptors. It shares a non-heme iron and each subunit binds pheophytin, quinone, additional chlorophylls, carotenoids and lipids. D1 provides most of the ligands for the Mn4-Ca-O5 cluster of the oxygen-evolving complex (OEC). There is also a Cl(-1) ion associated with D1 and D2, which is required for oxygen evolution. The PSII complex binds additional chlorophylls, carotenoids and specific lipids.. In terms of processing, tyr-161 forms a radical intermediate that is referred to as redox-active TyrZ, YZ or Y-Z. C-terminally processed by CTPA; processing is essential to allow assembly of the oxygen-evolving complex and thus photosynthetic growth.

Its subcellular location is the plastid. It is found in the chloroplast thylakoid membrane. It catalyses the reaction 2 a plastoquinone + 4 hnu + 2 H2O = 2 a plastoquinol + O2. In terms of biological role, photosystem II (PSII) is a light-driven water:plastoquinone oxidoreductase that uses light energy to abstract electrons from H(2)O, generating O(2) and a proton gradient subsequently used for ATP formation. It consists of a core antenna complex that captures photons, and an electron transfer chain that converts photonic excitation into a charge separation. The D1/D2 (PsbA/PsbD) reaction center heterodimer binds P680, the primary electron donor of PSII as well as several subsequent electron acceptors. This is Photosystem II protein D1 from Nephroselmis olivacea (Green alga).